We begin with the raw amino-acid sequence, 2271 residues long: Serine-rich adhesin for platelets (2271 aa).

The first 89 residues, 1–89 (MSKRQKAFHD…VNMLHDQQAF (89 aa)), serve as a signal peptide directing secretion. The segment at 90–230 (AASDAPLTSE…KTSTTSTSTA (141 aa)) is serine-rich repeat region 1, SRR1. A compositionally biased stretch (polar residues) spans 100–111 (LNTQSETVGNQN). 3 disordered regions span residues 100 to 229 (LNTQ…STST), 751 to 791 (NSMS…VVST), and 806 to 2243 (SVSA…GLLG). A compositionally biased stretch (low complexity) spans 112 to 128 (STTIEASTSTADSTSVT). Polar residues predominate over residues 129-140 (KNSSSVQTSNSD). Residues 150–229 (VTSTTNSTSN…NKTSTTSTST (80 aa)) are compositionally biased toward low complexity. The segment at 231–751 (PVKLRTFSRL…TTFKYEVTRN (521 aa)) is non-repeat region (NRR). Low complexity-rich tracts occupy residues 752–791 (SMSD…VVST), 806–1392 (SVSA…LSLS), and 1402–2214 (SNSA…ATSE). The serine-rich repeat region 2, SRR2 stretch occupies residues 752–2232 (SMSDSVSTSG…AQSEKRLPDT (1481 aa)). The LPXTG sorting signal motif lies at 2229 to 2233 (LPDTG). At threonine 2232 the chain carries Pentaglycyl murein peptidoglycan amidated threonine. Positions 2233-2271 (GDSIKQNGLLGGVMTLLVGLGLMKRKKKKDENDQDDSQA) are cleaved as a propeptide — removed by sortase.

The protein belongs to the serine-rich repeat protein (SRRP) family. Post-translationally, proteolytically cleaved by a metalloprotease. Glycosylated. It is probable that most of the Ser residues in SSR1 and SSR2 are O-GlcNAcylated. Sequential glycosylation by sugar transferases are able to generate complex sugar polymorphisms.

It is found in the secreted. Its subcellular location is the cell wall. Its function is as follows. Mediates binding to human platelets, possibly through a receptor-ligand interaction. Probably associated with virulence in endovascular infection. The chain is Serine-rich adhesin for platelets (sraP) from Staphylococcus aureus (strain Mu50 / ATCC 700699).